Here is a 249-residue protein sequence, read N- to C-terminus: Proteasome subunit alpha type-3 (249 aa).

Belongs to the peptidase T1A family. The 26S proteasome consists of a 20S proteasome core and two 19S regulatory subunits. The 20S proteasome core is composed of 28 subunits that are arranged in four stacked rings, resulting in a barrel-shaped structure. The two end rings are each formed by seven alpha subunits, and the two central rings are each formed by seven beta subunits. The catalytic chamber with the active sites is on the inside of the barrel.

Its subcellular location is the cytoplasm. It localises to the nucleus. Functionally, the proteasome is a multicatalytic proteinase complex which is characterized by its ability to cleave peptides with Arg, Phe, Tyr, Leu, and Glu adjacent to the leaving group at neutral or slightly basic pH. The proteasome has an ATP-dependent proteolytic activity. The chain is Proteasome subunit alpha type-3 (PAG1) from Spinacia oleracea (Spinach).